Reading from the N-terminus, the 792-residue chain is Leucine--tRNA ligase (792 aa).

The 'HIGH' region motif lies at 39–50 (PYPSAAGLHLGH). The 'KMSKS' region signature appears at 569 to 573 (KMSKS). Residue lysine 572 coordinates ATP.

This sequence belongs to the class-I aminoacyl-tRNA synthetase family.

It is found in the cytoplasm. It catalyses the reaction tRNA(Leu) + L-leucine + ATP = L-leucyl-tRNA(Leu) + AMP + diphosphate. This Mycoplasma genitalium (strain ATCC 33530 / DSM 19775 / NCTC 10195 / G37) (Mycoplasmoides genitalium) protein is Leucine--tRNA ligase.